Consider the following 382-residue polypeptide: Toluene efflux pump periplasmic linker protein TtgD (382 aa).

Residues 1 to 23 form the signal peptide; sequence MRLERALRARQLIPLAAIWLLVG. The N-palmitoyl cysteine moiety is linked to residue cysteine 24. Cysteine 24 carries the S-diacylglycerol cysteine lipid modification. Residues 100–136 adopt a coiled-coil conformation; that stretch reads YEALLARAEASLLTAQNLARRYERLLDTNAISQQQYD.

Belongs to the membrane fusion protein (MFP) (TC 8.A.1) family.

It localises to the cell inner membrane. Its function is as follows. The periplasmic linker protein component of an inducible organic solvent efflux pump. Involved in export of toluene and styrene but not of m-xylene, propylbenzene or ethylbenzene. Is not involved in antibiotic or AMP efflux. The protein is Toluene efflux pump periplasmic linker protein TtgD (ttgD) of Pseudomonas putida (strain DOT-T1E).